Consider the following 428-residue polypeptide: Adenylosuccinate synthetase (428 aa).

Residues 12-18 (GDEGKGK) and 40-42 (GHT) each bind GTP. D13 functions as the Proton acceptor in the catalytic mechanism. Residues D13 and G40 each coordinate Mg(2+). IMP is bound by residues 13-16 (DEGK), 38-41 (NAGH), T130, R144, Q225, T240, and R304. H41 functions as the Proton donor in the catalytic mechanism. A substrate-binding site is contributed by 300 to 306 (VTTGRSR). GTP contacts are provided by residues R306, 332–334 (KID), and 414–416 (GVG).

This sequence belongs to the adenylosuccinate synthetase family. In terms of assembly, homodimer. The cofactor is Mg(2+).

It localises to the cytoplasm. The enzyme catalyses IMP + L-aspartate + GTP = N(6)-(1,2-dicarboxyethyl)-AMP + GDP + phosphate + 2 H(+). The protein operates within purine metabolism; AMP biosynthesis via de novo pathway; AMP from IMP: step 1/2. Plays an important role in the de novo pathway of purine nucleotide biosynthesis. Catalyzes the first committed step in the biosynthesis of AMP from IMP. The polypeptide is Adenylosuccinate synthetase (Clostridium botulinum (strain Eklund 17B / Type B)).